A 186-amino-acid polypeptide reads, in one-letter code: UPF0398 protein BPUM_1952 (186 aa).

This sequence belongs to the UPF0398 family.

The protein is UPF0398 protein BPUM_1952 of Bacillus pumilus (strain SAFR-032).